A 520-amino-acid chain; its full sequence is Transactivator/viroplasmin protein (520 aa).

A disordered region spans residues 487–520; sequence QNASADSGPKDGPPPTRSIVEKEDVPTTSSKQVD.

It belongs to the caulimoviridae viroplasmin family.

The protein localises to the host cytoplasm. Enhances the ribosomal termination-reinitiation event leading to the translation of major open reading frames on the polycistronic viral RNAs. This is Transactivator/viroplasmin protein from Arabidopsis thaliana (Mouse-ear cress).